Consider the following 547-residue polypeptide: Chorismate synthase (547 aa).

Active-site residues include histidine 17, histidine 104, and aspartate 500.

It belongs to the chorismate synthase family.

Its subcellular location is the cytoplasm. It is found in the cytosol. It carries out the reaction 5-O-(1-carboxyvinyl)-3-phosphoshikimate = chorismate + phosphate. The enzyme catalyses FMNH2 + NADP(+) = FMN + NADPH + 2 H(+). It participates in metabolic intermediate biosynthesis; chorismate biosynthesis; chorismate from D-erythrose 4-phosphate and phosphoenolpyruvate: step 7/7. Its function is as follows. Bifunctional chorismate synthase and flavin reductase. Catalyzes the conversion of 5-enolpyruvylshikimate 3-phosphate (EPSP) to form chorismate. Acts also as a flavin reductase (FR) able to generate reduced flavin mononucleotide in the presence of NADPH. This chain is Chorismate synthase, found in Plasmodium vivax (strain Salvador I).